The sequence spans 197 residues: Pyridoxal 5'-phosphate synthase subunit PdxT (197 aa).

52–54 contributes to the L-glutamine binding site; it reads GES. The Nucleophile role is filled by C84. L-glutamine is bound by residues R111 and 139–140; that span reads IR. Residues H175 and E177 each act as charge relay system in the active site.

It belongs to the glutaminase PdxT/SNO family. In terms of assembly, in the presence of PdxS, forms a dodecamer of heterodimers. Only shows activity in the heterodimer.

The enzyme catalyses aldehydo-D-ribose 5-phosphate + D-glyceraldehyde 3-phosphate + L-glutamine = pyridoxal 5'-phosphate + L-glutamate + phosphate + 3 H2O + H(+). The catalysed reaction is L-glutamine + H2O = L-glutamate + NH4(+). Its pathway is cofactor biosynthesis; pyridoxal 5'-phosphate biosynthesis. In terms of biological role, catalyzes the hydrolysis of glutamine to glutamate and ammonia as part of the biosynthesis of pyridoxal 5'-phosphate. The resulting ammonia molecule is channeled to the active site of PdxS. In Halorubrum lacusprofundi (strain ATCC 49239 / DSM 5036 / JCM 8891 / ACAM 34), this protein is Pyridoxal 5'-phosphate synthase subunit PdxT.